A 283-amino-acid polypeptide reads, in one-letter code: Elongation factor Ts (283 aa).

The involved in Mg(2+) ion dislocation from EF-Tu stretch occupies residues 82–85 (TDFV).

Belongs to the EF-Ts family.

The protein resides in the cytoplasm. Associates with the EF-Tu.GDP complex and induces the exchange of GDP to GTP. It remains bound to the aminoacyl-tRNA.EF-Tu.GTP complex up to the GTP hydrolysis stage on the ribosome. The chain is Elongation factor Ts from Photorhabdus laumondii subsp. laumondii (strain DSM 15139 / CIP 105565 / TT01) (Photorhabdus luminescens subsp. laumondii).